We begin with the raw amino-acid sequence, 299 residues long: Acetylglutamate kinase (299 aa).

Substrate contacts are provided by residues 70-71 (GG), Arg92, and Asn186.

Belongs to the acetylglutamate kinase family. ArgB subfamily.

Its subcellular location is the cytoplasm. It carries out the reaction N-acetyl-L-glutamate + ATP = N-acetyl-L-glutamyl 5-phosphate + ADP. Its pathway is amino-acid biosynthesis; L-arginine biosynthesis; N(2)-acetyl-L-ornithine from L-glutamate: step 2/4. Functionally, catalyzes the ATP-dependent phosphorylation of N-acetyl-L-glutamate. This is Acetylglutamate kinase from Thermoanaerobacter sp. (strain X514).